The chain runs to 277 residues: Basic leucine zipper 9 (277 aa).

Residues 73–141 (ADSPVSANKP…ESAKRSRRRK (69 aa)) are disordered. S100 bears the Phosphoserine mark. A compositionally biased stretch (polar residues) spans 109–118 (AGQSEMTNDP). The bZIP domain occupies 120 to 183 (DLKRIRRMNS…RSAGTNNRVL (64 aa)). The segment at 122–141 (KRIRRMNSNRESAKRSRRRK) is basic motif. The short motif at 124–131 (IRRMNSNR) is the Nuclear localization signal element. The segment at 148 to 162 (LETQVDSLKGDNSTL) is leucine-zipper.

This sequence belongs to the bZIP family. In terms of assembly, homodimer. Interacts with BZIP1, BZIP2, BZIP10, BZIP11, BZIP25, BZIP44, BZIP53 and BZIP63. Post-translationally, phosphorylated. Expressed in roots, shoots, stems, young leaves, and flowers, mostly in vascular tissues (e.g. phloem).

The protein resides in the nucleus. Transcription factor. This chain is Basic leucine zipper 9 (BZIP9), found in Arabidopsis thaliana (Mouse-ear cress).